The chain runs to 859 residues: DNA mismatch repair protein MutS (859 aa).

ATP is bound at residue 614-621 (GPNMGGKS).

Belongs to the DNA mismatch repair MutS family.

In terms of biological role, this protein is involved in the repair of mismatches in DNA. It is possible that it carries out the mismatch recognition step. This protein has a weak ATPase activity. In Histophilus somni (strain 2336) (Haemophilus somnus), this protein is DNA mismatch repair protein MutS.